Here is a 142-residue protein sequence, read N- to C-terminus: Large ribosomal subunit protein uL11 (142 aa).

It belongs to the universal ribosomal protein uL11 family. As to quaternary structure, part of the ribosomal stalk of the 50S ribosomal subunit. Interacts with L10 and the large rRNA to form the base of the stalk. L10 forms an elongated spine to which L12 dimers bind in a sequential fashion forming a multimeric L10(L12)X complex. In terms of processing, one or more lysine residues are methylated.

In terms of biological role, forms part of the ribosomal stalk which helps the ribosome interact with GTP-bound translation factors. This chain is Large ribosomal subunit protein uL11, found in Xanthomonas campestris pv. campestris (strain B100).